Consider the following 420-residue polypeptide: UDP-N-acetylglucosamine 1-carboxyvinyltransferase (420 aa).

K22–N23 provides a ligand contact to phosphoenolpyruvate. R91 is a binding site for UDP-N-acetyl-alpha-D-glucosamine. The active-site Proton donor is C115. C115 is subject to 2-(S-cysteinyl)pyruvic acid O-phosphothioketal. Residues R120–L124, K160–V163, D305, and I327 contribute to the UDP-N-acetyl-alpha-D-glucosamine site.

It belongs to the EPSP synthase family. MurA subfamily.

It localises to the cytoplasm. It carries out the reaction phosphoenolpyruvate + UDP-N-acetyl-alpha-D-glucosamine = UDP-N-acetyl-3-O-(1-carboxyvinyl)-alpha-D-glucosamine + phosphate. Its pathway is cell wall biogenesis; peptidoglycan biosynthesis. Cell wall formation. Adds enolpyruvyl to UDP-N-acetylglucosamine. The sequence is that of UDP-N-acetylglucosamine 1-carboxyvinyltransferase from Proteus mirabilis (strain HI4320).